A 453-amino-acid polypeptide reads, in one-letter code: MGKEKTHINIVVIGHVDAGKSTTTGHLIYKCGGIDKRVIEKYEKEASEMGKQSFKYAWVMDKLKAERERGITIDIALWKFETSKYYFTIIDAPGHRDFIKNMITGTSQADCAVLVIASPTGEFEAGIAKNGQTREHALLAYTLGVKQMIVAINKMDEKSTNYSQARYDEIVKEVSSFIKKIGYNPEKVAFVPISGWNGDNMLERSDKMEWYKGPTLLEALDAIVEPKRPHDKPLRIPLQDVYKIGGIGTVPVGRVETGIIKPGMVVTFAPAGLSTEVKSVEMHHEQLPEARPGDNVGFNVKNVSVKEIKRGMVAGDSKNDPPQETEKFVAQVIVLNHPGQIHAGYSPVLDCHTAHIACKFTEIVDKVDRRTGAVVAKEGTAAVVLKNGDAAMVELTPSRPMCVESFTEYPPLGRFAVRDMRQTVAVGVIKSTVKKAPGKAGDKKGAAAPSKKK.

The region spanning 5–230 (KTHINIVVIG…DAIVEPKRPH (226 aa)) is the tr-type G domain. The interval 14–21 (GHVDAGKS) is G1. 14–21 (GHVDAGKS) lines the GTP pocket. The segment at 70 to 74 (GITID) is G2. The interval 91 to 94 (DAPG) is G3. GTP contacts are provided by residues 91-95 (DAPGH) and 153-156 (NKMD). The tract at residues 153-156 (NKMD) is G4. The G5 stretch occupies residues 194 to 196 (SGW).

The protein belongs to the TRAFAC class translation factor GTPase superfamily. Classic translation factor GTPase family. EF-Tu/EF-1A subfamily. As to quaternary structure, binds to actin.

The protein resides in the cytoplasm. This protein promotes the GTP-dependent binding of aminoacyl-tRNA to the A-site of ribosomes during protein biosynthesis. It is also an abundant actin filament bundling protein. The chain is Elongation factor 1-alpha (eef1a2) from Dictyostelium discoideum (Social amoeba).